A 435-amino-acid polypeptide reads, in one-letter code: Hyaluronidase-1 (435 aa).

Positions 1-21 (MAAHLLPICALFLTLLDMAQG) are cleaved as a signal peptide. Cystine bridges form between C43–C333 and C207–C221. N99 is a glycosylation site (N-linked (GlcNAc...) asparagine). E131 (proton donor) is an active-site residue. 2 N-linked (GlcNAc...) asparagine glycosylation sites follow: N216 and N350. Residues 354 to 430 (GALLCSQALC…YPGWQAPWCE (77 aa)) form the EGF-like domain. 3 disulfide bridges follow: C358–C369, C363–C418, and C420–C429.

This sequence belongs to the glycosyl hydrolase 56 family. In terms of tissue distribution, highly expressed in the liver, kidney and heart. Weakly expressed in lung, placenta and skeletal muscle. No expression detected in adult brain. Isoform 1 is expressed only in bladder and prostate cancer cells, G2/G3 bladder tumor tissues and lymph node specimens showing tumor invasive tumors cells. Isoform 3, isoform 4, isoform 5 and isoform 6 are expressed in normal bladder and bladder tumor tissues.

It localises to the secreted. The protein localises to the lysosome. It catalyses the reaction Random hydrolysis of (1-&gt;4)-linkages between N-acetyl-beta-D-glucosamine and D-glucuronate residues in hyaluronate.. Its function is as follows. May have a role in promoting tumor progression. May block the TGFB1-enhanced cell growth. In Homo sapiens (Human), this protein is Hyaluronidase-1 (HYAL1).